The following is a 183-amino-acid chain: Nucleosome assembly protein 1-like 5 (183 aa).

The interval 1-71 (MADSENQGPA…APKPKNDFIE (71 aa)) is disordered. 2 stretches are compositionally biased toward low complexity: residues 7 to 21 (QGPA…AAEA) and 28 to 49 (AEGG…SAAG). The stretch at 81–107 (VLALKKLQKRCDKIEAKFDKEFQALEK) forms a coiled coil. The segment covering 135-161 (EGEEEEEEEYEDDEEEGEEEEEEEEAA) has biased composition (acidic residues). Positions 135-183 (EGEEEEEEEYEDDEEEGEEEEEEEEAAAEAAAGAKHDDAHAEMPDDAKK) are disordered. Residues 168-183 (AKHDDAHAEMPDDAKK) show a composition bias toward basic and acidic residues.

It belongs to the nucleosome assembly protein (NAP) family.

It is found in the nucleus. The chain is Nucleosome assembly protein 1-like 5 (NAP1L5) from Pongo abelii (Sumatran orangutan).